The sequence spans 493 residues: Cholesteryl ester transfer protein (493 aa).

The first 17 residues, 1-17 (MLAATVLTLALLGNAHA), serve as a signal peptide directing secretion. N-linked (GlcNAc...) (complex) asparagine glycosylation occurs at asparagine 105. An intrachain disulfide couples cysteine 160 to cysteine 201. 3 N-linked (GlcNAc...) asparagine glycosylation sites follow: asparagine 257, asparagine 358, and asparagine 413.

Belongs to the BPI/LBP/Plunc superfamily. BPI/LBP family. As to expression, expressed by the liver and secreted in plasma.

It is found in the secreted. The catalysed reaction is cholesteryl (9Z-octadecenoate)(in) = cholesteryl (9Z-octadecenoate)(out). The enzyme catalyses 1,2,3-tri-(9Z-octadecenoyl)-glycerol(in) = 1,2,3-tri-(9Z-octadecenoyl)-glycerol(out). It catalyses the reaction cholesteryl (9Z,12Z)-octadecadienoate(in) = cholesteryl (9Z,12Z)-octadecadienoate(out). Involved in the transfer of neutral lipids, including cholesteryl ester and triglyceride, among lipoprotein particles. Allows the net movement of cholesteryl ester from high density lipoproteins/HDL to triglyceride-rich very low density lipoproteins/VLDL, and the equimolar transport of triglyceride from VLDL to HDL. Regulates the reverse cholesterol transport, by which excess cholesterol is removed from peripheral tissues and returned to the liver for elimination. The sequence is that of Cholesteryl ester transfer protein from Homo sapiens (Human).